The chain runs to 286 residues: Merozoite surface protein 2 (286 aa).

The first 20 residues, 1 to 20 (MKVIKTLSIINFFIFVTFNI), serve as a signal peptide directing secretion. Residues asparagine 22 and asparagine 36 are each glycosylated (N-linked (GlcNAc...) asparagine). Residues 43-248 (MTESKTPTPT…SQKECTDGNK (206 aa)) are disordered. The interval 44-212 (TESKTPTPTG…EQTESPELQS (169 aa)) is polymorphic region. The span at 54 to 68 (AGAGASGSAGSGDGA) shows a compositional bias: gly residues. Repeat unit 1 spans residues 59-68 (SGSAGSGDGA). Residues 59–106 (SGSAGSGDGASGSASGSASGSASGSAGASGSASGSAGASGSASGSAGA) are 5 X 10 AA tandem repeats of S-G-S-A-[GS]-[GS]-[AD]-G-A. A 2; partial repeat occupies 69–76 (SGSASGSA). A compositionally biased stretch (low complexity) spans 69–137 (SGSASGSASG…STSTSSENPN (69 aa)). Repeat copies occupy residues 77 to 86 (SGSASGSAGA), 88 to 96 (GSASGSAGA), and 97 to 106 (SGSASGSAGA). 2 stretches are compositionally biased toward polar residues: residues 153 to 179 (KPNQANKETQNNSNVQQDSQTKSNVPP) and 186 to 214 (KSPTAQPEQAENSAPTAEQTESPELQSAP). Asparagine 163 is a glycosylation site (N-linked (GlcNAc...) asparagine). Asparagine 235 carries N-linked (GlcNAc...) asparagine glycosylation. Residues 239-248 (SQKECTDGNK) are compositionally biased toward basic and acidic residues. Cysteine 243 and cysteine 251 are joined by a disulfide. Asparagine 259 and asparagine 260 each carry an N-linked (GlcNAc...) asparagine glycan. The GPI-anchor amidated asparagine moiety is linked to residue asparagine 260. A propeptide spans 261–286 (SSNIASINKFVVLISATLVLSFAIFI) (removed in mature form).

The protein localises to the cell membrane. Functionally, may play a role in the merozoite attachment to the erythrocyte. In Plasmodium falciparum (isolate 311), this protein is Merozoite surface protein 2.